Reading from the N-terminus, the 273-residue chain is MAIVKCKPTSAGRRHVVKVVNTELHKGKPFAALLDTKSKTGGRNNLGRITTRHIGGGHKQHYRLIDFKRNKLDIPAVVERLEYDPNRSANIALVLYKDGERRYILAPKGLVAGDTIQAGASAPIKVGNSLPMRNIPVGSTVHNVELKPGKGGQIARSAGAYVQIIAREGNYVTLRLRSGEMRKVLAECSATIGEVGNSEHMLRVLGKAGANRWRGIRPTVRGTAMNPVDHPHGGGEGRNFGKHPVTPWGVQTKGKKTRHNKRTDKFIVRRRGK.

The tract at residues 221–273 is disordered; it reads RGTAMNPVDHPHGGGEGRNFGKHPVTPWGVQTKGKKTRHNKRTDKFIVRRRGK. Over residues 253-273 the composition is skewed to basic residues; that stretch reads KGKKTRHNKRTDKFIVRRRGK.

Belongs to the universal ribosomal protein uL2 family. As to quaternary structure, part of the 50S ribosomal subunit. Forms a bridge to the 30S subunit in the 70S ribosome.

Its function is as follows. One of the primary rRNA binding proteins. Required for association of the 30S and 50S subunits to form the 70S ribosome, for tRNA binding and peptide bond formation. It has been suggested to have peptidyltransferase activity; this is somewhat controversial. Makes several contacts with the 16S rRNA in the 70S ribosome. In Glaesserella parasuis serovar 5 (strain SH0165) (Haemophilus parasuis), this protein is Large ribosomal subunit protein uL2.